A 422-amino-acid polypeptide reads, in one-letter code: Mannose-1-phosphate guanylyltransferase regulatory subunit alpha-B (422 aa).

A substrate-binding domain region spans residues 2–253 (LKAIILIGGP…QHFWSQIKSA (252 aa)). GDP-alpha-D-mannose-binding residues include Glu-85 and Gln-249. The hexapeptide repeat domain stretch occupies residues 275–422 (LATNQGGTPK…NRSFKNQIIL (148 aa)). Residues 358–386 (TPSDPNPNDPYAKIDSETLFRDGGLTPSI) are C-loop.

Belongs to the transferase hexapeptide repeat family. Component of the GMPPA-GMPPB mannose-1-phosphate guanylyltransferase complex composed of 4 GMPPA subunits and 8 GMPPB subunits; the complex is organized into three layers, a central layer made up of 2 GMPPA dimers sandwiched between two layers each made up of 2 GMPPB dimers.

Its pathway is nucleotide-sugar biosynthesis; GDP-alpha-D-mannose biosynthesis; GDP-alpha-D-mannose from alpha-D-mannose 1-phosphate (GTP route): step 1/1. Its function is as follows. Regulatory subunit of the GMPPA-GMPPB mannose-1-phosphate guanylyltransferase complex; reduces the catalytic activity of GMPPB when part of the complex. Mediates allosteric feedback inhibition of GMPPB catalytic activity upon binding GDP-alpha-D-mannose. Together with GMPPB regulates GDP-alpha-D-mannose levels. One of two paralogs (gmppaa and gmppab) that may have redundant functions. In Danio rerio (Zebrafish), this protein is Mannose-1-phosphate guanylyltransferase regulatory subunit alpha-B (gmppab).